Consider the following 274-residue polypeptide: tRNA-cytidine(32) 2-sulfurtransferase (274 aa).

Positions 40-45 (SGGKDS) match the PP-loop motif motif. C115, C118, and C206 together coordinate [4Fe-4S] cluster.

It belongs to the TtcA family. In terms of assembly, homodimer. The cofactor is Mg(2+). [4Fe-4S] cluster is required as a cofactor.

The protein resides in the cytoplasm. It catalyses the reaction cytidine(32) in tRNA + S-sulfanyl-L-cysteinyl-[cysteine desulfurase] + AH2 + ATP = 2-thiocytidine(32) in tRNA + L-cysteinyl-[cysteine desulfurase] + A + AMP + diphosphate + H(+). It functions in the pathway tRNA modification. Its function is as follows. Catalyzes the ATP-dependent 2-thiolation of cytidine in position 32 of tRNA, to form 2-thiocytidine (s(2)C32). The sulfur atoms are provided by the cysteine/cysteine desulfurase (IscS) system. This Pseudomonas fluorescens (strain Pf0-1) protein is tRNA-cytidine(32) 2-sulfurtransferase.